Reading from the N-terminus, the 283-residue chain is Phosphatidylserine decarboxylase proenzyme (283 aa).

Catalysis depends on charge relay system; for autoendoproteolytic cleavage activity residues Asp-96, His-152, and Ser-250. The active-site Schiff-base intermediate with substrate; via pyruvic acid; for decarboxylase activity is Ser-250. Ser-250 carries the pyruvic acid (Ser); by autocatalysis modification.

The protein belongs to the phosphatidylserine decarboxylase family. PSD-B subfamily. Prokaryotic type I sub-subfamily. As to quaternary structure, heterodimer of a large membrane-associated beta subunit and a small pyruvoyl-containing alpha subunit. The cofactor is pyruvate. Is synthesized initially as an inactive proenzyme. Formation of the active enzyme involves a self-maturation process in which the active site pyruvoyl group is generated from an internal serine residue via an autocatalytic post-translational modification. Two non-identical subunits are generated from the proenzyme in this reaction, and the pyruvate is formed at the N-terminus of the alpha chain, which is derived from the carboxyl end of the proenzyme. The autoendoproteolytic cleavage occurs by a canonical serine protease mechanism, in which the side chain hydroxyl group of the serine supplies its oxygen atom to form the C-terminus of the beta chain, while the remainder of the serine residue undergoes an oxidative deamination to produce ammonia and the pyruvoyl prosthetic group on the alpha chain. During this reaction, the Ser that is part of the protease active site of the proenzyme becomes the pyruvoyl prosthetic group, which constitutes an essential element of the active site of the mature decarboxylase.

Its subcellular location is the cell membrane. It carries out the reaction a 1,2-diacyl-sn-glycero-3-phospho-L-serine + H(+) = a 1,2-diacyl-sn-glycero-3-phosphoethanolamine + CO2. It participates in phospholipid metabolism; phosphatidylethanolamine biosynthesis; phosphatidylethanolamine from CDP-diacylglycerol: step 2/2. In terms of biological role, catalyzes the formation of phosphatidylethanolamine (PtdEtn) from phosphatidylserine (PtdSer). The protein is Phosphatidylserine decarboxylase proenzyme of Acinetobacter baumannii (strain ACICU).